Consider the following 30-residue polypeptide: Kalata-B14 (30 aa).

The segment at residues 1-30 is a cross-link (cyclopeptide (Gly-Asp)); the sequence is GLPVCGESCFGGTCNTPGCACDPWPVCTRD. Cystine bridges form between C5–C19, C9–C21, and C14–C27.

In terms of processing, this is a cyclic peptide.

Functionally, probably participates in a plant defense mechanism. The chain is Kalata-B14 from Oldenlandia affinis.